The sequence spans 541 residues: Chaperonin GroEL (541 aa).

ATP is bound by residues 29 to 32 (TLGP), 86 to 90 (DGTTT), G413, 478 to 480 (NAL), and D494.

This sequence belongs to the chaperonin (HSP60) family. Forms a cylinder of 14 subunits composed of two heptameric rings stacked back-to-back. Interacts with the co-chaperonin GroES.

The protein resides in the cytoplasm. The enzyme catalyses ATP + H2O + a folded polypeptide = ADP + phosphate + an unfolded polypeptide.. Functionally, together with its co-chaperonin GroES, plays an essential role in assisting protein folding. The GroEL-GroES system forms a nano-cage that allows encapsulation of the non-native substrate proteins and provides a physical environment optimized to promote and accelerate protein folding. The sequence is that of Chaperonin GroEL from Lachnoclostridium phytofermentans (strain ATCC 700394 / DSM 18823 / ISDg) (Clostridium phytofermentans).